The primary structure comprises 94 residues: MVLKTVGVAGTLESSDAMITVEPANQGGIVIDISSSVKRQFGRQIEETVLNTIKELGVENANVKVVDKGALNYALIARTKAAVYRAAESNDYKF.

S14 carries the O-(phosphoribosyl dephospho-coenzyme A)serine modification.

Belongs to the CitD family. In terms of assembly, oligomer with a subunit composition of (alpha,beta,gamma)6.

It localises to the cytoplasm. Covalent carrier of the coenzyme of citrate lyase. The chain is Citrate lyase acyl carrier protein from Fusobacterium nucleatum subsp. nucleatum (strain ATCC 25586 / DSM 15643 / BCRC 10681 / CIP 101130 / JCM 8532 / KCTC 2640 / LMG 13131 / VPI 4355).